Consider the following 501-residue polypeptide: Myrosinase MA1 (501 aa).

3 disulfides stabilise this stretch: Cys6–Cys438, Cys14–Cys434, and Cys206–Cys214. Asn21 carries N-linked (GlcNAc...) asparagine glycosylation. Gln39 is a substrate binding site. His56 is a Zn(2+) binding site. N-linked (GlcNAc...) asparagine glycosylation occurs at Asn60. Asp70 serves as a coordination point for Zn(2+). An N-linked (GlcNAc...) asparagine glycan is attached at Asn90. Substrate-binding residues include His141 and Asn186. Gln187 contributes to the L-ascorbate binding site. Asn218 and Asn244 each carry an N-linked (GlcNAc...) asparagine glycan. Position 259 (Arg259) interacts with L-ascorbate. Residues Asn265 and Asn292 are each glycosylated (N-linked (GlcNAc...) asparagine). Tyr330 lines the substrate pocket. 3 N-linked (GlcNAc...) asparagine glycosylation sites follow: Asn343, Asn346, and Asn361. Residue Glu409 is the Nucleophile of the active site. Substrate contacts are provided by residues Trp457 and 464–465 (EF). Asn482 is a glycosylation site (N-linked (GlcNAc...) asparagine).

This sequence belongs to the glycosyl hydrolase 1 family. Homodimer. In vacuoles called myrosin grains of a certain class of cells, myrosin cells, distributed in the cotyledons and the axis of the embryo as well as in different organs of the growing plant.

The protein localises to the vacuole. The enzyme catalyses a thioglucoside + H2O = a sugar + a thiol.. Its function is as follows. Degradation of glucosinolates (glucose residue linked by a thioglucoside bound to an amino acid derivative) to glucose, sulfate and any of the products: thiocyanates, isothiocyanates, nitriles, epithionitriles or oxazolidine-2-thiones. In Sinapis alba (White mustard), this protein is Myrosinase MA1.